We begin with the raw amino-acid sequence, 455 residues long: Probable 1,4-beta-D-glucan cellobiohydrolase A (455 aa).

The N-terminal stretch at 1-17 (MHQRALLFSAFWTAVQA) is a signal peptide. An N-linked (GlcNAc...) asparagine glycan is attached at Asn81. Catalysis depends on Glu227, which acts as the Nucleophile. Glu232 serves as the catalytic Proton donor. A glycan (N-linked (GlcNAc...) asparagine) is linked at Asn285.

It belongs to the glycosyl hydrolase 7 (cellulase C) family.

It localises to the secreted. The enzyme catalyses Hydrolysis of (1-&gt;4)-beta-D-glucosidic linkages in cellulose and cellotetraose, releasing cellobiose from the non-reducing ends of the chains.. In terms of biological role, the biological conversion of cellulose to glucose generally requires three types of hydrolytic enzymes: (1) Endoglucanases which cut internal beta-1,4-glucosidic bonds; (2) Exocellobiohydrolases that cut the disaccharide cellobiose from the non-reducing end of the cellulose polymer chain; (3) Beta-1,4-glucosidases which hydrolyze the cellobiose and other short cello-oligosaccharides to glucose. This is Probable 1,4-beta-D-glucan cellobiohydrolase A (cbhA) from Aspergillus flavus (strain ATCC 200026 / FGSC A1120 / IAM 13836 / NRRL 3357 / JCM 12722 / SRRC 167).